The chain runs to 1671 residues: AF4/FMR2 family member lilli (1671 aa).

Disordered regions lie at residues 53–79, 126–304, 393–599, 723–761, 774–1162, and 1185–1311; these read YSQN…QQGI, SAPG…EKDV, LAGE…SNKW, DSGT…QLPG, PTQS…TTPH, and KLTP…LQIG. Residues 70 to 79 are compositionally biased toward basic and acidic residues; that stretch reads REKIERQQGI. Composition is skewed to low complexity over residues 145 to 179 and 210 to 242; these read SLGH…QQQQ and PSSS…SSGG. T416 carries the post-translational modification Phosphothreonine. Positions 424-437 are enriched in basic and acidic residues; it reads LKTEKNHSLEKQDS. Over residues 439 to 450 the composition is skewed to acidic residues; the sequence is LENDLELSESED. Residues S446 and S448 each carry the phosphoserine modification. The span at 459–479 shows a compositional bias: low complexity; that stretch reads SAGNSSNSSESDSSESGSESS. Positions 487–496 are enriched in basic residues; it reads HPNHQQHHHQ. Composition is skewed to low complexity over residues 497–522 and 561–587; these read LQQQ…PQPL and PAGV…GSSS. Polar residues predominate over residues 588–599; that stretch reads NKTPSPTESNKW. Over residues 723-755 the composition is skewed to low complexity; it reads DSGTSASGSSSSSSSSSDSAVGGEVVPMPGPGE. Positions 774 to 786 are enriched in polar residues; the sequence is PTQSQKAPPSNSV. Over residues 800 to 810 the composition is skewed to basic residues; that stretch reads QRQKKPRKKKA. 2 positions are modified to phosphoserine: S819 and S820. A DNA-binding region (a.T hook) is located at residues 849 to 861; it reads KKGRGRPRKQQQS. Low complexity predominate over residues 858–896; the sequence is QQQSGGSGNLSSASAGSSSQTKGPTLTAAKKPLAKTPLA. 2 positions are modified to phosphoserine: S869 and S871. Polar residues predominate over residues 907-917; it reads SQSSSNGNTPT. Low complexity-rich tracts occupy residues 947–963 and 988–1002; these read SSSA…SSSS and ALLG…SSGS. Polar residues predominate over residues 1009 to 1020; that stretch reads SRSQVGSGQALA. Low complexity predominate over residues 1032-1058; it reads SQHSQHLSSSECSSSSGGCTAVCSSSS. Residues 1063-1080 show a composition bias toward basic and acidic residues; sequence EGRREKERERKPKSDKNK. A compositionally biased stretch (pro residues) spans 1120–1130; sequence QPPPPHAPPAA. A compositionally biased stretch (polar residues) spans 1188-1203; the sequence is PAQQNGHLTPKDQATN. Basic and acidic residues-rich tracts occupy residues 1224-1241 and 1250-1280; these read EHPV…EAKF and FQLK…EQPP. S1360 is subject to Phosphoserine. Phosphothreonine is present on T1362. Positions 1562–1581 are enriched in low complexity; it reads NTPSSISPSNSVGSQGSGSN. The disordered stretch occupies residues 1562–1586; that stretch reads NTPSSISPSNSVGSQGSGSNTPPGR.

This sequence belongs to the AF4 family.

It localises to the nucleus. In terms of biological role, has a role in transcriptional regulation. Acts in parallel with the Ras/MAPK and the PI3K/PKB pathways in the control of cell identity and cellular growth. Essential for regulation of the cytoskeleton and cell growth but not for cell proliferation or growth rate. Required specifically for the microtubule-based basal transport of lipid droplets. Plays a partially redundant function downstream of Raf in cell fate specification in the developing eye. Pair-rule protein that regulates embryonic cellularization, gastrulation and segmentation. This chain is AF4/FMR2 family member lilli, found in Drosophila yakuba (Fruit fly).